We begin with the raw amino-acid sequence, 320 residues long: MNWTAIVVETSTEAVDAVSYILTDTGATGVKIDDAADYQKLKPGKYGPYGEIVDPSTLPHREEGAAVTGYYPPTTFVPEKIADIRQRVAKLADFGLNPAPARVAAEEIDNQDWATAWQKYYHPVRVTRELTIVPQWEEYTPATADEKLLVLDPGMAFGTGTHPTTQLMLQALTIALRGGESMIDVGTGSGVLSIAAKQLGAGEVWAYDIDDVAVKSAKKNLALNPIAKDVHTGVNSLLDGIHTQVDLVVANILAEIILPLVPQAFENLKPGGKFLTSGIINTKFETVKKAIEAQGFVVDETMRIKDWYGIIAHKPAPEEA.

Residues T165, G186, D208, and N251 each contribute to the S-adenosyl-L-methionine site.

This sequence belongs to the methyltransferase superfamily. PrmA family.

It localises to the cytoplasm. The enzyme catalyses L-lysyl-[protein] + 3 S-adenosyl-L-methionine = N(6),N(6),N(6)-trimethyl-L-lysyl-[protein] + 3 S-adenosyl-L-homocysteine + 3 H(+). Its function is as follows. Methylates ribosomal protein L11. The chain is Ribosomal protein L11 methyltransferase from Limosilactobacillus fermentum (strain NBRC 3956 / LMG 18251) (Lactobacillus fermentum).